Reading from the N-terminus, the 373-residue chain is Integrator complex subunit 15 (373 aa).

This sequence belongs to the Integrator subunit 15 family. In terms of assembly, belongs to the multiprotein complex Integrator, at least composed of IntS1, IntS2, IntS3, IntS4, omd/IntS5, IntS6, defl/IntS7, IntS8, IntS9, IntS10, IntS11, IntS12, asun/IntS13, IntS14 and IntS15. The core complex associates with protein phosphatase 2A subunits mts/PP2A and Pp2A-29B, to form the Integrator-PP2A (INTAC) complex.

It localises to the nucleus. Component of the integrator complex, a multiprotein complex that terminates RNA polymerase II (Pol II) transcription in the promoter-proximal region of genes. The integrator complex provides a quality checkpoint during transcription elongation by driving premature transcription termination of transcripts that are unfavorably configured for transcriptional elongation: the complex terminates transcription by (1) catalyzing dephosphorylation of the C-terminal domain (CTD) of Pol II subunit Rbp1 and Spt5, and (2) degrading the exiting nascent RNA transcript via endonuclease activity. The integrator complex is also involved in the 3'-end processing of the U7 snRNA, and also the spliceosomal snRNAs U1, U2, U4 and U5. This chain is Integrator complex subunit 15, found in Drosophila melanogaster (Fruit fly).